We begin with the raw amino-acid sequence, 230 residues long: NAD(P)H-hydrate epimerase (230 aa).

Positions 11–223 (YAAADIRAAE…DVGLDLSGAT (213 aa)) constitute a YjeF N-terminal domain. Residue 59-63 (NNGGD) coordinates (6S)-NADPHX. Asn60 and Asp125 together coordinate K(+). Residues 129–137 (GIGTTDSPA) and Asp165 each bind (6S)-NADPHX. Ser168 is a K(+) binding site.

Belongs to the NnrE/AIBP family. The cofactor is K(+).

It carries out the reaction (6R)-NADHX = (6S)-NADHX. The enzyme catalyses (6R)-NADPHX = (6S)-NADPHX. In terms of biological role, catalyzes the epimerization of the S- and R-forms of NAD(P)HX, a damaged form of NAD(P)H that is a result of enzymatic or heat-dependent hydration. This is a prerequisite for the S-specific NAD(P)H-hydrate dehydratase to allow the repair of both epimers of NAD(P)HX. The protein is NAD(P)H-hydrate epimerase of Clavibacter michiganensis subsp. michiganensis (strain NCPPB 382).